A 92-amino-acid polypeptide reads, in one-letter code: UPF0223 protein SP_1404 (92 aa).

The protein belongs to the UPF0223 family.

The sequence is that of UPF0223 protein SP_1404 from Streptococcus pneumoniae serotype 4 (strain ATCC BAA-334 / TIGR4).